The primary structure comprises 868 residues: Envelope glycoprotein gp160 (868 aa).

An N-terminal signal peptide occupies residues M1–A33. Over N34–I696 the chain is Extracellular. C55 and C75 are disulfide-bonded. 21 N-linked (GlcNAc...) asparagine; by host glycosylation sites follow: N89, N131, N138, N139, N142, N162, N166, N195, N198, N208, N245, N252, N273, N287, N300, N306, N312, N342, N349, N365, and N371. 5 cysteine pairs are disulfide-bonded: C120/C216, C127/C207, C132/C163, C229/C258, and C239/C250. The segment at C132–N162 is V1. A V2 region spans residues C163–C207. Residues C307–H340 form a V3 region. C307 and C341 are joined by a disulfide. A CD4-binding loop region spans residues S373–H383. Intrachain disulfides connect C387-C456 and C394-C429. A V4 region spans residues C394–C429. 5 N-linked (GlcNAc...) asparagine; by host glycosylation sites follow: N395, N405, N409, N459, and N473. V5 stretches follow at residues E472–G482 and Q474–G482. Residues A523–A544 form a fusion peptide region. Positions K586–L604 are immunosuppression. A disulfide bond links C610 and C616. 4 N-linked (GlcNAc...) asparagine; by host glycosylation sites follow: N623, N628, N637, and N649. Residues R645–A679 adopt a coiled-coil conformation. Residues Q674–K695 form an MPER; binding to GalCer region. A helical membrane pass occupies residues F697–V717. Residues N718–L868 lie on the Cytoplasmic side of the membrane. Positions Y724–L727 match the YXXL motif; contains endocytosis signal motif. A disordered region spans residues T731–D755. Basic and acidic residues predominate over residues G738–D755. The S-palmitoyl cysteine; by host moiety is linked to residue C776. A Di-leucine internalization motif motif is present at residues L867–L868.

The protein belongs to the HIV-1 env protein family. In terms of assembly, the mature envelope protein (Env) consists of a homotrimer of non-covalently associated gp120-gp41 heterodimers. The resulting complex protrudes from the virus surface as a spike. There seems to be as few as 10 spikes on the average virion. Interacts with host CD4, CCR5 and CXCR4. Gp120 also interacts with the C-type lectins CD209/DC-SIGN and CLEC4M/DC-SIGNR (collectively referred to as DC-SIGN(R)). Gp120 and gp41 interact with GalCer. Gp120 interacts with host ITGA4/ITGB7 complex; on CD4+ T-cells, this interaction results in rapid activation of integrin ITGAL/LFA-1, which facilitates efficient cell-to-cell spreading of HIV-1. Gp120 interacts with cell-associated heparan sulfate; this interaction increases virus infectivity on permissive cells and may be involved in infection of CD4- cells. As to quaternary structure, the mature envelope protein (Env) consists of a homotrimer of non-covalently associated gp120-gp41 heterodimers. The resulting complex protrudes from the virus surface as a spike. There seems to be as few as 10 spikes on the average virion. Post-translationally, highly glycosylated by host. The high number of glycan on the protein is reffered to as 'glycan shield' because it contributes to hide protein sequence from adaptive immune system. In terms of processing, palmitoylation of the transmembrane protein and of Env polyprotein (prior to its proteolytic cleavage) is essential for their association with host cell membrane lipid rafts. Palmitoylation is therefore required for envelope trafficking to classical lipid rafts, but not for viral replication. Specific enzymatic cleavages in vivo yield mature proteins. Envelope glycoproteins are synthesized as an inactive precursor that is heavily N-glycosylated and processed likely by host cell furin in the Golgi to yield the mature SU and TM proteins. The cleavage site between SU and TM requires the minimal sequence [KR]-X-[KR]-R. About 2 of the 9 disulfide bonds of gp41 are reduced by P4HB/PDI, following binding to CD4 receptor.

The protein localises to the virion membrane. Its subcellular location is the host cell membrane. It is found in the host endosome membrane. Oligomerizes in the host endoplasmic reticulum into predominantly trimers. In a second time, gp160 transits in the host Golgi, where glycosylation is completed. The precursor is then proteolytically cleaved in the trans-Golgi and thereby activated by cellular furin or furin-like proteases to produce gp120 and gp41. Its function is as follows. Attaches the virus to the host lymphoid cell by binding to the primary receptor CD4. This interaction induces a structural rearrangement creating a high affinity binding site for a chemokine coreceptor like CXCR4 and/or CCR5. Acts as a ligand for CD209/DC-SIGN and CLEC4M/DC-SIGNR, which are respectively found on dendritic cells (DCs), and on endothelial cells of liver sinusoids and lymph node sinuses. These interactions allow capture of viral particles at mucosal surfaces by these cells and subsequent transmission to permissive cells. HIV subverts the migration properties of dendritic cells to gain access to CD4+ T-cells in lymph nodes. Virus transmission to permissive T-cells occurs either in trans (without DCs infection, through viral capture and transmission), or in cis (following DCs productive infection, through the usual CD4-gp120 interaction), thereby inducing a robust infection. In trans infection, bound virions remain infectious over days and it is proposed that they are not degraded, but protected in non-lysosomal acidic organelles within the DCs close to the cell membrane thus contributing to the viral infectious potential during DCs' migration from the periphery to the lymphoid tissues. On arrival at lymphoid tissues, intact virions recycle back to DCs' cell surface allowing virus transmission to CD4+ T-cells. Functionally, acts as a class I viral fusion protein. Under the current model, the protein has at least 3 conformational states: pre-fusion native state, pre-hairpin intermediate state, and post-fusion hairpin state. During fusion of viral and target intracellular membranes, the coiled coil regions (heptad repeats) assume a trimer-of-hairpins structure, positioning the fusion peptide in close proximity to the C-terminal region of the ectodomain. The formation of this structure appears to drive apposition and subsequent fusion of viral and target cell membranes. Complete fusion occurs in host cell endosomes and is dynamin-dependent, however some lipid transfer might occur at the plasma membrane. The virus undergoes clathrin-dependent internalization long before endosomal fusion, thus minimizing the surface exposure of conserved viral epitopes during fusion and reducing the efficacy of inhibitors targeting these epitopes. Membranes fusion leads to delivery of the nucleocapsid into the cytoplasm. The protein is Envelope glycoprotein gp160 of Human immunodeficiency virus type 1 group M subtype B (isolate CDC-451) (HIV-1).